Reading from the N-terminus, the 72-residue chain is Translation initiation factor IF-1 2 (72 aa).

The S1-like domain occupies 1–72 (MAKEDAIEVD…KRGRITYRMK (72 aa)).

The protein belongs to the IF-1 family. Component of the 30S ribosomal translation pre-initiation complex which assembles on the 30S ribosome in the order IF-2 and IF-3, IF-1 and N-formylmethionyl-tRNA(fMet); mRNA recruitment can occur at any time during PIC assembly.

It is found in the cytoplasm. One of the essential components for the initiation of protein synthesis. Stabilizes the binding of IF-2 and IF-3 on the 30S subunit to which N-formylmethionyl-tRNA(fMet) subsequently binds. Helps modulate mRNA selection, yielding the 30S pre-initiation complex (PIC). Upon addition of the 50S ribosomal subunit IF-1, IF-2 and IF-3 are released leaving the mature 70S translation initiation complex. This is Translation initiation factor IF-1 2 from Nitratidesulfovibrio vulgaris (strain DP4) (Desulfovibrio vulgaris).